Here is a 242-residue protein sequence, read N- to C-terminus: Segregation and condensation protein A (242 aa).

It belongs to the ScpA family. As to quaternary structure, component of a cohesin-like complex composed of ScpA, ScpB and the Smc homodimer, in which ScpA and ScpB bind to the head domain of Smc. The presence of the three proteins is required for the association of the complex with DNA.

Its subcellular location is the cytoplasm. Functionally, participates in chromosomal partition during cell division. May act via the formation of a condensin-like complex containing Smc and ScpB that pull DNA away from mid-cell into both cell halves. The polypeptide is Segregation and condensation protein A (Streptococcus mitis).